We begin with the raw amino-acid sequence, 158 residues long: Large ribosomal subunit protein uL18 (158 aa).

Belongs to the universal ribosomal protein uL18 family. As to quaternary structure, part of the 50S ribosomal subunit. Contacts the 5S and 23S rRNAs.

This is one of the proteins that bind and probably mediate the attachment of the 5S RNA into the large ribosomal subunit, where it forms part of the central protuberance. This is Large ribosomal subunit protein uL18 from Picrophilus torridus (strain ATCC 700027 / DSM 9790 / JCM 10055 / NBRC 100828 / KAW 2/3).